Consider the following 380-residue polypeptide: Probable protein phosphatase 2C 27 (380 aa).

The PPM-type phosphatase domain occupies R84 to F344. Positions 128, 129, 292, and 335 each coordinate Mn(2+).

This sequence belongs to the PP2C family. It depends on Mg(2+) as a cofactor. Mn(2+) serves as cofactor. Expressed in roots, leaves, stems, flower, and trichomes.

The protein resides in the nucleus. The protein localises to the cytoplasm. The catalysed reaction is O-phospho-L-seryl-[protein] + H2O = L-seryl-[protein] + phosphate. It catalyses the reaction O-phospho-L-threonyl-[protein] + H2O = L-threonyl-[protein] + phosphate. Its function is as follows. Confers salt tolerance by triggering the expression of stress-responsive genes. The chain is Probable protein phosphatase 2C 27 from Arabidopsis thaliana (Mouse-ear cress).